We begin with the raw amino-acid sequence, 87 residues long: Mitochondrial import inner membrane translocase subunit TIM9 (87 aa).

Met1 carries the post-translational modification N-acetylmethionine. The Twin CX3C motif motif lies at 35–59 (CFTDCVNDFTTSKLTNKEQTCIMKC). 2 disulfides stabilise this stretch: Cys35-Cys59 and Cys39-Cys55.

The protein belongs to the small Tim family. In terms of assembly, heterohexamer; composed of 3 copies of TIM9 and 3 copies of TIM10, named soluble 70 kDa complex. Associates with the TIM12 component of the TIM22 complex, whose core is composed of TIM18, TIM22 and TIM54. Interacts with the transmembrane regions of multi-pass transmembrane proteins in transit.

Its subcellular location is the mitochondrion inner membrane. It localises to the mitochondrion intermembrane space. Its function is as follows. Mitochondrial intermembrane chaperone that participates in the import and insertion of multi-pass transmembrane proteins into the mitochondrial inner membrane. Also required for the transfer of beta-barrel precursors from the TOM complex to the sorting and assembly machinery (SAM complex) of the outer membrane. Acts as a chaperone-like protein that protects the hydrophobic precursors from aggregation and guide them through the mitochondrial intermembrane space. Compared to TIM10, it may have a strong structural role. This is Mitochondrial import inner membrane translocase subunit TIM9 (TIM9) from Saccharomyces cerevisiae (strain ATCC 204508 / S288c) (Baker's yeast).